The following is a 368-amino-acid chain: MMESFSETKSSIATNKSTTPTHEVQISKELQDIKNEVFELKKSHEQCKEKGIKVKKDINDVFKHADDITNTLAKHEKESSQLISRIKHLNAKEKQLDITKELSAHLDQIKVNVKRAKVSFTPETGSIFVRLFLGQVNVKHMRENEKFRLKQEYEKFKKKTNPQFILFVVLLLLYPQSSFVTTSWQIWLLYYYITLALRENILLVNGSSIKPWWIMHHYLSIAGSLTNLLFPLSESFSYFLPQVTYFSGCQGLVQILTNRYQQGRLYKLVAMGKANIIDVTGESEGWGNDPGWTPSALFLFPFLLFVQFFQLYNSFSFFAFAYQRSGYVEWQVFSCGFIFLCLGLGNLLTTLSVYYQKWKNFSKYNKEN.

The interval 1 to 23 is disordered; it reads MMESFSETKSSIATNKSTTPTHE. Residues 25-96 adopt a coiled-coil conformation; it reads QISKELQDIK…KHLNAKEKQL (72 aa). 6 helical membrane-spanning segments follow: residues 164–184, 186–206, 212–232, 236–256, 291–311, and 332–352; these read FILF…TTSW, IWLL…LVNG, WWIM…LFPL, FSYF…VQIL, GWTP…FFQL, and VFSC…TTLS.

It belongs to the TMEM120 family.

The protein localises to the membrane. This is Transmembrane protein 120 homolog (tmem120) from Dictyostelium discoideum (Social amoeba).